A 1974-amino-acid polypeptide reads, in one-letter code: Protein Ycf2 (1974 aa).

The disordered stretch occupies residues 219-246 (SQLKGSSYQSRDHLDSISNEDSEYHNQR). 1308–1315 (GSIGTGRS) is a binding site for ATP.

The protein belongs to the Ycf2 family.

It is found in the plastid. It localises to the chloroplast stroma. Probable ATPase of unknown function. Its presence in a non-photosynthetic plant (Epifagus virginiana) and experiments in tobacco indicate that it has an essential function which is probably not related to photosynthesis. The chain is Protein Ycf2 from Jasminum nudiflorum (Winter jasmine).